A 160-amino-acid polypeptide reads, in one-letter code: Nucleotide-binding protein CbuK_1936 (160 aa).

The protein belongs to the YajQ family.

In terms of biological role, nucleotide-binding protein. This Coxiella burnetii (strain CbuK_Q154) (Coxiella burnetii (strain Q154)) protein is Nucleotide-binding protein CbuK_1936.